The primary structure comprises 94 residues: Co-chaperonin GroES (94 aa).

Belongs to the GroES chaperonin family. Heptamer of 7 subunits arranged in a ring. Interacts with the chaperonin GroEL.

It localises to the cytoplasm. Together with the chaperonin GroEL, plays an essential role in assisting protein folding. The GroEL-GroES system forms a nano-cage that allows encapsulation of the non-native substrate proteins and provides a physical environment optimized to promote and accelerate protein folding. GroES binds to the apical surface of the GroEL ring, thereby capping the opening of the GroEL channel. The protein is Co-chaperonin GroES of Tetragenococcus halophilus (Pediococcus halophilus).